A 172-amino-acid chain; its full sequence is Putative phosphoesterase BCG9842_B4061 (172 aa).

Catalysis depends on His34, which acts as the Proton donor. Short sequence motifs (HXTX) lie at residues 34–37 (HITL) and 115–118 (HLTI). The Proton acceptor role is filled by His115.

This sequence belongs to the 2H phosphoesterase superfamily. YjcG family.

This is Putative phosphoesterase BCG9842_B4061 from Bacillus cereus (strain G9842).